A 375-amino-acid chain; its full sequence is Acetylornithine aminotransferase (375 aa).

Residues 93–94 (GT) and Phe-120 contribute to the pyridoxal 5'-phosphate site. Arg-123 is a binding site for N(2)-acetyl-L-ornithine. 205–208 (DEVQ) contacts pyridoxal 5'-phosphate. At Lys-234 the chain carries N6-(pyridoxal phosphate)lysine. Thr-262 lines the N(2)-acetyl-L-ornithine pocket. Thr-263 serves as a coordination point for pyridoxal 5'-phosphate.

Belongs to the class-III pyridoxal-phosphate-dependent aminotransferase family. ArgD subfamily. Homodimer. Requires pyridoxal 5'-phosphate as cofactor.

It localises to the cytoplasm. It catalyses the reaction N(2)-acetyl-L-ornithine + 2-oxoglutarate = N-acetyl-L-glutamate 5-semialdehyde + L-glutamate. The protein operates within amino-acid biosynthesis; L-arginine biosynthesis; N(2)-acetyl-L-ornithine from L-glutamate: step 4/4. The sequence is that of Acetylornithine aminotransferase from Staphylococcus epidermidis (strain ATCC 35984 / DSM 28319 / BCRC 17069 / CCUG 31568 / BM 3577 / RP62A).